Consider the following 276-residue polypeptide: UPF0328 protein ECU01_0090/ECU01_1520/ECU02_1550/ECU08_0020 (276 aa).

Positions methionine 1 to histidine 24 are disordered.

This sequence belongs to the UPF0328 family.

This chain is UPF0328 protein ECU01_0090/ECU01_1520/ECU02_1550/ECU08_0020, found in Encephalitozoon cuniculi (strain GB-M1) (Microsporidian parasite).